The sequence spans 494 residues: Alpha-amylase B (494 aa).

The first 18 residues, 1-18, serve as a signal peptide directing secretion; that stretch reads MFLAKSIVCLALLAVANA. Gln-19 bears the Pyrrolidone carboxylic acid mark. A disulfide bridge connects residues Cys-46 and Cys-102. Positions 116, 165, and 174 each coordinate Ca(2+). A disulfide bridge links Cys-153 with Cys-167. Arg-202 contributes to the chloride binding site. Catalysis depends on Asp-204, which acts as the Nucleophile. Residue His-208 coordinates Ca(2+). The Proton donor role is filled by Glu-241. 2 residues coordinate chloride: Asn-304 and Arg-343. Cystine bridges form between Cys-376–Cys-382 and Cys-448–Cys-460.

Belongs to the glycosyl hydrolase 13 family. As to quaternary structure, monomer. Requires Ca(2+) as cofactor. The cofactor is chloride.

It carries out the reaction Endohydrolysis of (1-&gt;4)-alpha-D-glucosidic linkages in polysaccharides containing three or more (1-&gt;4)-alpha-linked D-glucose units.. The chain is Alpha-amylase B (Amy-d) from Drosophila melanogaster (Fruit fly).